The primary structure comprises 140 residues: Small ribosomal subunit protein bS6 (140 aa).

The segment at 111 to 140 is disordered; that stretch reads EHFTGPAGAEGSDDESTESTDEAVAETADA. Positions 121 to 140 are enriched in acidic residues; sequence GSDDESTESTDEAVAETADA.

This sequence belongs to the bacterial ribosomal protein bS6 family.

In terms of biological role, binds together with bS18 to 16S ribosomal RNA. In Rhodopirellula baltica (strain DSM 10527 / NCIMB 13988 / SH1), this protein is Small ribosomal subunit protein bS6.